Here is a 280-residue protein sequence, read N- to C-terminus: uncharacterized protein (280 aa).

Residue 3–29 (KKIAIVTGASSGFGLLAAVKLARSFFV) participates in NADP(+) binding. A substrate-binding site is contributed by S139. The active-site Proton acceptor is the Y152.

It belongs to the short-chain dehydrogenases/reductases (SDR) family.

This is an uncharacterized protein from Bacillus subtilis (strain 168).